Reading from the N-terminus, the 360-residue chain is Phospho-N-acetylmuramoyl-pentapeptide-transferase (360 aa).

10 helical membrane-spanning segments follow: residues 21–41, 73–93, 97–117, 134–154, 168–188, 199–219, 239–259, 263–283, 288–308, and 338–358; these read YLTL…ILIG, TMGG…WADL, YVLV…VDDY, YFWQ…SATM, VFPQ…VGTS, GLAI…AYVT, LVIV…FNTY, VFMG…LAVL, LVLI…ILQV, and VIVR…ATLK.

The protein belongs to the glycosyltransferase 4 family. MraY subfamily. Requires Mg(2+) as cofactor.

It localises to the cell inner membrane. It catalyses the reaction UDP-N-acetyl-alpha-D-muramoyl-L-alanyl-gamma-D-glutamyl-meso-2,6-diaminopimeloyl-D-alanyl-D-alanine + di-trans,octa-cis-undecaprenyl phosphate = di-trans,octa-cis-undecaprenyl diphospho-N-acetyl-alpha-D-muramoyl-L-alanyl-D-glutamyl-meso-2,6-diaminopimeloyl-D-alanyl-D-alanine + UMP. The protein operates within cell wall biogenesis; peptidoglycan biosynthesis. In terms of biological role, catalyzes the initial step of the lipid cycle reactions in the biosynthesis of the cell wall peptidoglycan: transfers peptidoglycan precursor phospho-MurNAc-pentapeptide from UDP-MurNAc-pentapeptide onto the lipid carrier undecaprenyl phosphate, yielding undecaprenyl-pyrophosphoryl-MurNAc-pentapeptide, known as lipid I. In Alteromonas mediterranea (strain DSM 17117 / CIP 110805 / LMG 28347 / Deep ecotype), this protein is Phospho-N-acetylmuramoyl-pentapeptide-transferase.